The chain runs to 177 residues: Large ribosomal subunit protein uL6 (177 aa).

Positions R152–R171 are enriched in basic and acidic residues. Residues R152–K177 are disordered.

It belongs to the universal ribosomal protein uL6 family. Part of the 50S ribosomal subunit.

This protein binds to the 23S rRNA, and is important in its secondary structure. It is located near the subunit interface in the base of the L7/L12 stalk, and near the tRNA binding site of the peptidyltransferase center. The protein is Large ribosomal subunit protein uL6 of Shewanella putrefaciens (strain CN-32 / ATCC BAA-453).